The primary structure comprises 201 residues: 3-isopropylmalate dehydratase small subunit (201 aa).

Belongs to the LeuD family. LeuD type 1 subfamily. In terms of assembly, heterodimer of LeuC and LeuD.

It carries out the reaction (2R,3S)-3-isopropylmalate = (2S)-2-isopropylmalate. Its pathway is amino-acid biosynthesis; L-leucine biosynthesis; L-leucine from 3-methyl-2-oxobutanoate: step 2/4. Its function is as follows. Catalyzes the isomerization between 2-isopropylmalate and 3-isopropylmalate, via the formation of 2-isopropylmaleate. This chain is 3-isopropylmalate dehydratase small subunit, found in Paracoccus denitrificans (strain Pd 1222).